The primary structure comprises 2269 residues: Anaphase-promoting complex subunit 1 (2269 aa).

5 disordered regions span residues Pro-305–Asn-334, Ser-379–Ser-433, Asn-609–Leu-644, Lys-804–Asn-845, and Ser-1136–Ser-1197. Composition is skewed to low complexity over residues Ser-306–Asn-334, Ser-379–Gln-430, Asn-609–Asn-638, Asn-809–Asn-845, and Ser-1136–Asn-1159. Polar residues predominate over residues Gly-1160–Asn-1177. 2 PC repeats span residues Ala-1440–Asp-1472 and Thr-1483–Glu-1520. Residues Ser-1535–Lys-1586 form a disordered region. Residues Ser-1540–Ser-1559 are compositionally biased toward low complexity. Gly residues predominate over residues Asn-1560 to Asn-1570. Positions Asn-1571–Ser-1583 are enriched in low complexity. 3 PC repeats span residues Gly-1605–Tyr-1637, Gly-1722–Tyr-1756, and Leu-1792–Arg-1807. Low complexity predominate over residues Asn-1960–Asn-1993. The disordered stretch occupies residues Asn-1960 to Leu-1997.

The protein belongs to the APC1 family. As to quaternary structure, the APC/C is composed of at least 13 subunits that stay tightly associated throughout the cell cycle: anapc1, anapc2, anapc3, anapc4, anapc5, anapc6, anapc7, anapc8, anapc10, anapc11, cdc20, cdc26 and cdh1.

The protein resides in the nucleus. It functions in the pathway protein modification; protein ubiquitination. In terms of biological role, component of the anaphase promoting complex/cyclosome (APC/C), a cell cycle-regulated E3 ubiquitin-protein ligase complex that controls progression through mitosis and the G1 phase of the cell cycle. The sequence is that of Anaphase-promoting complex subunit 1 (anapc1) from Dictyostelium discoideum (Social amoeba).